The primary structure comprises 483 residues: Transmembrane protein 39B (483 aa).

Asn-9 carries N-linked (GlcNAc...) asparagine glycosylation. A run of 7 helical transmembrane segments spans residues 76–96, 114–134, 158–182, 187–207, 281–301, 414–434, and 440–460; these read HLLFELQLFFCHLIALFVHYI, TSLNFHLIDFNVLTLTTIVLA, LLVATRFAVLTGTGWSLCRSIILLF, FFNLLFLCYPFGMYIPFLQLG, EVLLSSMLSAYYVAFVPVWFV, VLNILTTLEGVLIFYQLYSLL, and HHTISLALILFSNYYAFFKLL.

It belongs to the TMEM39 family.

Its subcellular location is the endoplasmic reticulum membrane. Its function is as follows. May protect the cells against DNA damage caused by exposure to the cold-warming stress and facilitates tissue damage repair during the recovery phase. The polypeptide is Transmembrane protein 39B (Xenopus tropicalis (Western clawed frog)).